The chain runs to 327 residues: Malate dehydrogenase (327 aa).

An NAD(+)-binding site is contributed by 11–17; the sequence is GAAGQIS. Residues R92 and R98 each contribute to the substrate site. NAD(+) is bound by residues N105, Q112, and 129 to 131; that span reads VGN. Substrate is bound by residues N131 and R162. H187 serves as the catalytic Proton acceptor.

This sequence belongs to the LDH/MDH superfamily. MDH type 2 family.

It catalyses the reaction (S)-malate + NAD(+) = oxaloacetate + NADH + H(+). In terms of biological role, catalyzes the reversible oxidation of malate to oxaloacetate. This is Malate dehydrogenase from Teredinibacter turnerae (strain ATCC 39867 / T7901).